Reading from the N-terminus, the 254-residue chain is 3-beta-hydroxysteroid dehydrogenase (254 aa).

NAD(+) contacts are provided by residues 12–40 and Asp61; that span reads VTGG…SDIN. Ser139 contributes to the substrate binding site. Catalysis depends on Tyr152, which acts as the Proton acceptor. Lys156 contributes to the NAD(+) binding site.

Belongs to the short-chain dehydrogenases/reductases (SDR) family. In terms of assembly, homotetramer.

It carries out the reaction testosterone + NAD(+) = androst-4-ene-3,17-dione + NADH + H(+). The enzyme catalyses testosterone + NADP(+) = androst-4-ene-3,17-dione + NADPH + H(+). This Comamonas testosteroni (Pseudomonas testosteroni) protein is 3-beta-hydroxysteroid dehydrogenase.